The primary structure comprises 255 residues: Post-GPI attachment to proteins factor 2 (255 aa).

The next 6 membrane-spanning stretches (helical) occupy residues 25-45 (LAAL…SLLF), 80-100 (LAIF…LEYY), 111-131 (LGIL…CLSF), 143-163 (NAFV…YLLN), 185-205 (LFLV…RHNA), and 209-229 (AGVY…NMGF).

It belongs to the PGAP2 family.

The protein resides in the golgi apparatus membrane. It localises to the endoplasmic reticulum membrane. Involved in the lipid remodeling steps of GPI-anchor maturation. Required for stable expression of GPI-anchored proteins at the cell surface. This chain is Post-GPI attachment to proteins factor 2, found in Drosophila pseudoobscura pseudoobscura (Fruit fly).